A 135-amino-acid chain; its full sequence is Protein PsiE homolog (135 aa).

The next 4 helical transmembrane spans lie at Val20–Leu40, Tyr54–Val74, His82–Val102, and Pro107–Ala127.

The protein belongs to the PsiE family.

Its subcellular location is the cell inner membrane. This chain is Protein PsiE homolog, found in Yersinia enterocolitica serotype O:8 / biotype 1B (strain NCTC 13174 / 8081).